Reading from the N-terminus, the 347-residue chain is Transcription factor EC (347 aa).

A necessary for transcriptional transactivation region spans residues 1–119 (MTLDHQIINP…GLTSASCPSS (119 aa)). Residues 139–192 (QKKDNHNLIERRRRYNINYRIKELGTLIPKSNDPDMRWNKGTILKASVEYIKWL) form the bHLH domain. Positions 271 to 347 (PSPELCDQAI…SFSSDDGDEL (77 aa)) are necessary for transcriptional transactivation. The interval 319–347 (DPLLSATSPAVSKESSRRSSFSSDDGDEL) is disordered. Positions 326–341 (SPAVSKESSRRSSFSS) are enriched in low complexity.

Belongs to the MiT/TFE family. As to quaternary structure, homodimer. Forms heterodimers with TFE3. Forms heterodimers with MITF. Interacts with MITF. In terms of tissue distribution, expressed moderately in spleen, kidney, bone marrow, small intestine and leukocytes. Expressed weakly in testis, trachea and colon.

Its subcellular location is the nucleus. Transcriptional regulator that acts as a repressor or an activator. Acts as a transcriptional repressor on minimal promoter containing element F (that includes an E-box sequence). Binds to element F in an E-box sequence-specific manner. Acts as a transcriptional transactivator on the proximal promoter region of the tartrate-resistant acid phosphatase (TRAP) E-box containing promoter. Collaborates with MITF in target gene activation. Acts as a transcriptional repressor on minimal promoter containing mu E3 enhancer sequence. Binds to mu E3 DNA sequence of the immunoglobulin heavy-chain gene enhancer. Binds DNA in a homo- or heterodimeric form. In Homo sapiens (Human), this protein is Transcription factor EC (TFEC).